The chain runs to 333 residues: Protein VTE6, chloroplastic (333 aa).

Residues 1 to 65 constitute a chloroplast transit peptide; it reads MATISSTLLL…SRADGATAAA (65 aa). The next 6 membrane-spanning stretches (helical) occupy residues 94–114, 126–146, 171–191, 248–268, 274–294, and 307–327; these read LLIF…SGIA, AYGS…TAAT, VIGS…QVGG, TLAG…LGQI, AVCV…GASF, and VVNV…QQFI.

It belongs to the TMEM19 family.

The protein localises to the plastid. Its subcellular location is the chloroplast membrane. It carries out the reaction phytyl phosphate + a ribonucleoside 5'-triphosphate = phytyl diphosphate + a ribonucleoside 5'-diphosphate. The catalysed reaction is phytyl phosphate + CTP = phytyl diphosphate + CDP. It participates in cofactor biosynthesis; tocopherol biosynthesis. In terms of biological role, phytyl-phosphate kinase catalyzing the conversion of phytyl-monophosphate to phytyl-diphosphate. Involved in the activation and reutilization of phytol from chlorophyll degradation in plant metabolism, including tocopherol (vitamin E) biosynthesis. Involved in the biosynthesis of phylloquinone (vitamin K), which is required for the photosystem I (PSI) complex stability. This Arabidopsis thaliana (Mouse-ear cress) protein is Protein VTE6, chloroplastic.